A 580-amino-acid polypeptide reads, in one-letter code: Negative elongation factor B (580 aa).

Lys-519 bears the N6-acetyllysine mark. Residues 548 to 580 (LEQLDHRKPSPAQAAETPALELPLPSVPAPAPL) are disordered. Position 557 is a phosphoserine (Ser-557).

It belongs to the NELF-B family. As to quaternary structure, the NELF complex is composed of NELFA, NELFB, NELFCD (isoform NELF-C or isoform NELF-D) and NELFE; the N-terminus of NELFB binds to the NELFA:NELFCD subcomplex. Binds RNA which may help to stabilize the NELF complex on nucleic acid. Interacts with the first BRCT repeat of BRCA1. Interacts with KIAA1191. Interacts with NELFE. Widely expressed. Expressed in heart, brain, lung, placenta, liver, skeletal muscle, kidney and pancreas.

It localises to the nucleus. Its function is as follows. Essential component of the NELF complex, a complex that negatively regulates the elongation of transcription by RNA polymerase II. The NELF complex, which acts via an association with the DSIF complex and causes transcriptional pausing, is counteracted by the P-TEFb kinase complex. May be able to induce chromatin unfolding. Essential for early embryogenesis; plays an important role in maintaining the undifferentiated state of embryonic stem cells (ESCs) by preventing unscheduled expression of developmental genes. Plays a key role in establishing the responsiveness of stem cells to developmental cues; facilitates plasticity and cell fate commitment in ESCs by establishing the appropriate expression level of signaling molecules. Supports the transcription of genes involved in energy metabolism in cardiomyocytes; facilitates the association of transcription initiation factors with the promoters of the metabolism-related genes. Functionally, (Microbial infection) The NELF complex is involved in HIV-1 latency possibly involving recruitment of PCF11 to paused RNA polymerase II. In vitro, binds weakly to the HIV-1 TAR RNA which is located in the long terminal repeat (LTR) of HIV-1. The chain is Negative elongation factor B (NELFB) from Homo sapiens (Human).